The sequence spans 581 residues: MMAPMTNWLTFSLSPMEMLRSSDQSQFVSYDASSAASSSPYLLDNFYGWSNQKPQEFFKEEAQLAAAASMADSTILTTFVDPQSHHSQNHIPKLEDFLGDSSSIVRYSDNSQTDTQDSSLTQIYDPRHHHNQTGFYSDHHDFKTMAGFQSAFSTNSGSEVDDSASIGRTHLAGDYLGHVVESSGPELGFHGGSTGALSLGVNVNNNTNHRNDNDNHYRGNNNGERINNNNNNDNEKTDSEKEKAVVAVETSDCSNKKIADTFGQRTSIYRGVTRHRWTGRYEAHLWDNSCRREGQARKGRQGGYDKEDKAARAYDLAALKYWNATATTNFPITNYSKEVEEMKHMTKQEFIASLRRKSSGFSRGASIYRGVTRHHQQGRWQARIGRVAGNKDLYLGTFATEEEAAEAYDIAAIKFRGINAVTNFEMNRYDVEAIMKSALPIGGAAKRLKLSLEAAASSEQKPILGHHQLHHFQQQQQQQQLQLQSSPNHSSINFALCPNSAVQSQQIIPCGIPFEAAALYHHHQQQQQHQQQQQQQNFFQHFPANAASDSTGSNNNSNVQGTMGLMAPNPAEFFLWPNQSY.

2 disordered regions span residues 105-132 (VRYSDNSQTDTQDSSLTQIYDPRHHHNQ) and 205-240 (NNTNHRNDNDNHYRGNNNGERINNNNNNDNEKTDSE). Low complexity-rich tracts occupy residues 108–122 (SDNSQTDTQDSSLTQ) and 218–232 (RGNNNGERINNNNNN). 2 DNA-binding regions (AP2/ERF) span residues 268–331 (IYRG…TNFP) and 367–425 (IYRG…TNFE).

Belongs to the AP2/ERF transcription factor family. AP2 subfamily. Expressed in roots, seedlings, hypocotyl, inflorescence, siliques, and pistils. Also detected at low levels in leaves.

The protein localises to the nucleus. Functionally, probably acts as a transcriptional activator. Binds to the GCC-box pathogenesis-related promoter element. May be involved in the regulation of gene expression by stress factors and by components of stress signal transduction pathways. The chain is AP2-like ethylene-responsive transcription factor AIL6 from Arabidopsis thaliana (Mouse-ear cress).